The primary structure comprises 199 residues: ATP-dependent Clp protease proteolytic subunit 2 (199 aa).

Residue Ser98 is the Nucleophile of the active site. The active site involves His123.

The protein belongs to the peptidase S14 family. As to quaternary structure, fourteen ClpP subunits assemble into 2 heptameric rings which stack back to back to give a disk-like structure with a central cavity, resembling the structure of eukaryotic proteasomes.

The protein localises to the cytoplasm. The enzyme catalyses Hydrolysis of proteins to small peptides in the presence of ATP and magnesium. alpha-casein is the usual test substrate. In the absence of ATP, only oligopeptides shorter than five residues are hydrolyzed (such as succinyl-Leu-Tyr-|-NHMec, and Leu-Tyr-Leu-|-Tyr-Trp, in which cleavage of the -Tyr-|-Leu- and -Tyr-|-Trp bonds also occurs).. Its function is as follows. Cleaves peptides in various proteins in a process that requires ATP hydrolysis. Has a chymotrypsin-like activity. Plays a major role in the degradation of misfolded proteins. This chain is ATP-dependent Clp protease proteolytic subunit 2, found in Corynebacterium efficiens (strain DSM 44549 / YS-314 / AJ 12310 / JCM 11189 / NBRC 100395).